We begin with the raw amino-acid sequence, 514 residues long: Flagellin B (514 aa).

The protein belongs to the bacterial flagellin family. Heteromer of FlaA and FlaB. FlaB is located proximal to the hook while the remainder of the filament is composed of the predominant FlaA.

It localises to the secreted. The protein localises to the bacterial flagellum. Flagellin is the subunit protein which polymerizes to form the filaments of bacterial flagella. Important for motility and virulence. In Helicobacter pylori (strain ATCC 700392 / 26695) (Campylobacter pylori), this protein is Flagellin B (flaB).